A 216-amino-acid polypeptide reads, in one-letter code: Small ribosomal subunit protein uS5 (216 aa).

Positions 1–55 (MDKKLENQKDLLNQDPKVELNSQSVAKNPLNSREVKPIQRRRPLRKNARDKNSKP) are disordered. Residues 20 to 31 (LNSQSVAKNPLN) show a composition bias toward polar residues. In terms of domain architecture, S5 DRBM spans 57–120 (FEERVIAIHR…KDAQNRLVSV (64 aa)).

This sequence belongs to the universal ribosomal protein uS5 family. As to quaternary structure, part of the 30S ribosomal subunit. Contacts proteins S4 and S8.

Functionally, with S4 and S12 plays an important role in translational accuracy. In terms of biological role, located at the back of the 30S subunit body where it stabilizes the conformation of the head with respect to the body. This Mesomycoplasma hyopneumoniae (strain 7448) (Mycoplasma hyopneumoniae) protein is Small ribosomal subunit protein uS5.